A 338-amino-acid chain; its full sequence is Lipopolysaccharide 1,2-glucosyltransferase (338 aa).

Residues 33 to 38 (GVDANY) and 130 to 131 (DA) each bind UDP. Mg(2+)-binding residues include Asp130 and Asp132. Short sequence motifs (DXD) lie at residues 130 to 132 (DAD) and 215 to 217 (DQD). His264 contributes to the Mg(2+) binding site. UDP is bound at residue 264 to 270 (HYTGATK).

Belongs to the glycosyltransferase 8 family. Mg(2+) serves as cofactor.

The protein resides in the cell inner membrane. It carries out the reaction UDP-glucose + [lipopolysaccharide] = UDP + D-glucosyl-[lipopolysaccharide].. The catalysed reaction is alpha-D-Glc-(1-&gt;3)-[alpha-D-Gal-(1-&gt;6)]-alpha-D-Glc-(1-&gt;3)-[L-alpha-D-Hep-(1-&gt;7)]-4-O-PO3(2-)-L-alpha-D-Hep-(1-&gt;3)-4-O-PO3(2-)-L-alpha-D-Hep-(1-&gt;5)-[alpha-Kdo-(2-&gt;4)]-alpha-Kdo-(2-&gt;6)-lipid A + UDP-alpha-D-glucose = alpha-D-Glc-(1-&gt;2)-alpha-D-Glc-(1-&gt;3)-[alpha-D-Gal-(1-&gt;6)]-alpha-D-Glc-(1-&gt;3)-[L-alpha-D-Hep-(1-&gt;7)]-4-O-PO3(2-)-L-alpha-D-Hep-(1-&gt;3)-4-O-PO3(2-)-L-alpha-D-Hep-(1-&gt;5)-[alpha-Kdo-(2-&gt;4)]-alpha-Kdo-(2-&gt;6)-lipid A + UDP + H(+). Its pathway is bacterial outer membrane biogenesis; LPS core biosynthesis. Its function is as follows. Glucosyltransferase involved in the biosynthesis of the core oligosaccharide region of lipopolysaccharide (LPS). Catalyzes the addition of a glucose (glucose III) to the outer-core glucose II. This chain is Lipopolysaccharide 1,2-glucosyltransferase, found in Escherichia coli (strain K12).